The primary structure comprises 492 residues: Bifunctional protein GlmU (492 aa).

A pyrophosphorylase region spans residues 1–241; sequence MTFRGDTAVV…SALVAGVNDR (241 aa). UDP-N-acetyl-alpha-D-glucosamine-binding positions include 12–15, Lys26, Gln83, and 88–89; these read LAAG and GT. Residue Asp114 coordinates Mg(2+). The UDP-N-acetyl-alpha-D-glucosamine site is built by Gly151, Glu166, Asn181, and Asn239. Position 239 (Asn239) interacts with Mg(2+). Positions 242 to 262 are linker; that stretch reads VQLAQLGAELNRRIVAAHQMA. Residues 263-492 are N-acetyltransferase; it reads GVTVIDPATT…TPPPDADQTP (230 aa). 2 residues coordinate UDP-N-acetyl-alpha-D-glucosamine: Arg344 and Lys362. His374 serves as the catalytic Proton acceptor. UDP-N-acetyl-alpha-D-glucosamine is bound by residues Tyr377 and Asn388. Residues Ala391, 397 to 398, and Ala434 each bind acetyl-CoA; that span reads NY. Residues 451–492 form a disordered region; it reads GGPQRNIEDWVQQKRPGTPSAEAARKASAEQSTPPPDADQTP. Over residues 483–492 the composition is skewed to pro residues; the sequence is TPPPDADQTP.

It in the N-terminal section; belongs to the N-acetylglucosamine-1-phosphate uridyltransferase family. In the C-terminal section; belongs to the transferase hexapeptide repeat family. As to quaternary structure, homotrimer. Mg(2+) serves as cofactor.

Its subcellular location is the cytoplasm. It carries out the reaction alpha-D-glucosamine 1-phosphate + acetyl-CoA = N-acetyl-alpha-D-glucosamine 1-phosphate + CoA + H(+). The catalysed reaction is N-acetyl-alpha-D-glucosamine 1-phosphate + UTP + H(+) = UDP-N-acetyl-alpha-D-glucosamine + diphosphate. Its pathway is nucleotide-sugar biosynthesis; UDP-N-acetyl-alpha-D-glucosamine biosynthesis; N-acetyl-alpha-D-glucosamine 1-phosphate from alpha-D-glucosamine 6-phosphate (route II): step 2/2. It participates in nucleotide-sugar biosynthesis; UDP-N-acetyl-alpha-D-glucosamine biosynthesis; UDP-N-acetyl-alpha-D-glucosamine from N-acetyl-alpha-D-glucosamine 1-phosphate: step 1/1. It functions in the pathway bacterial outer membrane biogenesis; LPS lipid A biosynthesis. In terms of biological role, catalyzes the last two sequential reactions in the de novo biosynthetic pathway for UDP-N-acetylglucosamine (UDP-GlcNAc). The C-terminal domain catalyzes the transfer of acetyl group from acetyl coenzyme A to glucosamine-1-phosphate (GlcN-1-P) to produce N-acetylglucosamine-1-phosphate (GlcNAc-1-P), which is converted into UDP-GlcNAc by the transfer of uridine 5-monophosphate (from uridine 5-triphosphate), a reaction catalyzed by the N-terminal domain. This Mycobacterium marinum (strain ATCC BAA-535 / M) protein is Bifunctional protein GlmU.